The following is a 117-amino-acid chain: Immunoglobulin heavy variable 5-51 (117 aa).

The N-terminal stretch at 1-19 (MGSTAILALLLAVLQGVCA) is a signal peptide. The interval 20–44 (EVQLVQSGAEVKKPGESLKISCKGS) is framework-1. An Ig-like domain is found at 20–117 (EVQLVQSGAE…SDTAMYYCAR (98 aa)). A disulfide bridge connects residues Cys41 and Cys115. The interval 45–52 (GYSFTSYW) is complementarity-determining-1. The tract at residues 53–69 (IGWVRQMPGKGLEWMGI) is framework-2. The complementarity-determining-2 stretch occupies residues 70–77 (IYPGDSDT). The framework-3 stretch occupies residues 78–115 (RYSPSFQGQVTISADKSISTAYLQWSSLKASDTAMYYC). Residues 116–117 (AR) form a complementarity-determining-3 region.

Immunoglobulins are composed of two identical heavy chains and two identical light chains; disulfide-linked.

The protein localises to the secreted. It localises to the cell membrane. In terms of biological role, v region of the variable domain of immunoglobulin heavy chains that participates in the antigen recognition. Immunoglobulins, also known as antibodies, are membrane-bound or secreted glycoproteins produced by B lymphocytes. In the recognition phase of humoral immunity, the membrane-bound immunoglobulins serve as receptors which, upon binding of a specific antigen, trigger the clonal expansion and differentiation of B lymphocytes into immunoglobulins-secreting plasma cells. Secreted immunoglobulins mediate the effector phase of humoral immunity, which results in the elimination of bound antigens. The antigen binding site is formed by the variable domain of one heavy chain, together with that of its associated light chain. Thus, each immunoglobulin has two antigen binding sites with remarkable affinity for a particular antigen. The variable domains are assembled by a process called V-(D)-J rearrangement and can then be subjected to somatic hypermutations which, after exposure to antigen and selection, allow affinity maturation for a particular antigen. The polypeptide is Immunoglobulin heavy variable 5-51 (Homo sapiens (Human)).